Reading from the N-terminus, the 326-residue chain is Metal-binding protein YtgA (326 aa).

The first 21 residues, methionine 1 to glycine 21, serve as a signal peptide directing secretion. The Fe(2+) site is built by histidine 75, histidine 141, histidine 207, and aspartate 299.

The protein belongs to the bacterial solute-binding protein 9 family. As to quaternary structure, monomer.

Its subcellular location is the periplasm. In terms of biological role, part of the ATP-binding cassette (ABC) transport system YtgABCD involved in metal import. Binds Fe(2+), Mn(2+) and Ni(2+), with a preference for Fe(2+) and delivers them to the membrane permease for translocation into the cytoplasm. This chain is Metal-binding protein YtgA, found in Chlamydia trachomatis serovar D (strain ATCC VR-885 / DSM 19411 / UW-3/Cx).